A 222-amino-acid polypeptide reads, in one-letter code: Ribosomal RNA small subunit methyltransferase G (222 aa).

Residues G84, F89, 141-142, and R154 contribute to the S-adenosyl-L-methionine site; that span reads VE.

It belongs to the methyltransferase superfamily. RNA methyltransferase RsmG family.

It localises to the cytoplasm. It catalyses the reaction guanosine(527) in 16S rRNA + S-adenosyl-L-methionine = N(7)-methylguanosine(527) in 16S rRNA + S-adenosyl-L-homocysteine. In terms of biological role, specifically methylates the N7 position of guanine in position 527 of 16S rRNA. This chain is Ribosomal RNA small subunit methyltransferase G, found in Bradyrhizobium sp. (strain BTAi1 / ATCC BAA-1182).